A 48-amino-acid chain; its full sequence is Phosphatidylserine decarboxylase proenzyme (48 aa).

The protein belongs to the phosphatidylserine decarboxylase family. Type 1 subfamily. Pyruvate serves as cofactor.

It catalyses the reaction a 1,2-diacyl-sn-glycero-3-phospho-L-serine + H(+) = a 1,2-diacyl-sn-glycero-3-phosphoethanolamine + CO2. Its pathway is phospholipid metabolism; phosphatidylethanolamine biosynthesis; phosphatidylethanolamine from CDP-diacylglycerol: step 2/2. In Azotobacter vinelandii, this protein is Phosphatidylserine decarboxylase proenzyme (psd).